Here is a 202-residue protein sequence, read N- to C-terminus: GTP cyclohydrolase 1 (202 aa).

Residues cysteine 90, histidine 93, and cysteine 163 each coordinate Zn(2+).

This sequence belongs to the GTP cyclohydrolase I family. In terms of assembly, toroid-shaped homodecamer, composed of two pentamers of five dimers.

The enzyme catalyses GTP + H2O = 7,8-dihydroneopterin 3'-triphosphate + formate + H(+). The protein operates within cofactor biosynthesis; 7,8-dihydroneopterin triphosphate biosynthesis; 7,8-dihydroneopterin triphosphate from GTP: step 1/1. The chain is GTP cyclohydrolase 1 (folE) from Mycobacterium bovis (strain ATCC BAA-935 / AF2122/97).